A 186-amino-acid polypeptide reads, in one-letter code: Adenylyl-sulfate kinase (186 aa).

17–24 (GLSGAGKT) lines the ATP pocket. Serine 91 functions as the Phosphoserine intermediate in the catalytic mechanism.

Belongs to the APS kinase family.

The enzyme catalyses adenosine 5'-phosphosulfate + ATP = 3'-phosphoadenylyl sulfate + ADP + H(+). It functions in the pathway sulfur metabolism; hydrogen sulfide biosynthesis; sulfite from sulfate: step 2/3. In terms of biological role, catalyzes the synthesis of activated sulfate. The polypeptide is Adenylyl-sulfate kinase (Chloroflexus aurantiacus (strain ATCC 29364 / DSM 637 / Y-400-fl)).